A 270-amino-acid polypeptide reads, in one-letter code: NADPH-dependent 7-cyano-7-deazaguanine reductase (270 aa).

79–81 contacts substrate; it reads IES. Position 81 to 82 (81 to 82) interacts with NADPH; the sequence is SK. Cys-177 (thioimide intermediate) is an active-site residue. The active-site Proton donor is the Asp-184. Position 216–217 (216–217) interacts with substrate; that stretch reads HE. 245–246 is an NADPH binding site; it reads RG.

It belongs to the GTP cyclohydrolase I family. QueF type 2 subfamily. Homodimer.

The protein localises to the cytoplasm. The enzyme catalyses 7-aminomethyl-7-carbaguanine + 2 NADP(+) = 7-cyano-7-deazaguanine + 2 NADPH + 3 H(+). The protein operates within tRNA modification; tRNA-queuosine biosynthesis. Its function is as follows. Catalyzes the NADPH-dependent reduction of 7-cyano-7-deazaguanine (preQ0) to 7-aminomethyl-7-deazaguanine (preQ1). The protein is NADPH-dependent 7-cyano-7-deazaguanine reductase of Acinetobacter baumannii (strain SDF).